Reading from the N-terminus, the 79-residue chain is Cell division protein ZapB (79 aa).

A coiled-coil region spans residues 4 to 78; it reads EVFEKLEAKV…LQALLGKMEE (75 aa).

Belongs to the ZapB family. As to quaternary structure, homodimer. The ends of the coiled-coil dimer bind to each other, forming polymers. Interacts with FtsZ.

The protein localises to the cytoplasm. Non-essential, abundant cell division factor that is required for proper Z-ring formation. It is recruited early to the divisome by direct interaction with FtsZ, stimulating Z-ring assembly and thereby promoting cell division earlier in the cell cycle. Its recruitment to the Z-ring requires functional FtsA or ZipA. The chain is Cell division protein ZapB from Cronobacter sakazakii (strain ATCC BAA-894) (Enterobacter sakazakii).